Consider the following 255-residue polypeptide: MVDPVAALCNYNVLEVIFSYLELDDLSHCSQVCKSWYHFLNDENSDVWRWHCLNKLPKESLKSDLLASVSTYKTKLRAYFHAWSPNDCSRNVYIKPNGFTLHRNPVAQSTDAARGKIGFRHGRHTWEVIWEGPLGTVAVIGISTKEAALQCHGYVALLGSDDQSWGWNLVENHLLHNGDMQGSYPLLNNAPKYQVGERIRVILDCEDNTLSFEKNYEFLGVAFRGLPDKKLYPTVSAVYGNTEVSMVYLGTPLDG.

The F-box domain occupies 3–51; that stretch reads DPVAALCNYNVLEVIFSYLELDDLSHCSQVCKSWYHFLNDENSDVWRWH. The B30.2/SPRY domain occupies 61–253; it reads LKSDLLASVS…VSMVYLGTPL (193 aa).

It belongs to the FBXO45/Fsn family. Component of an E3 ubiquitin ligase complex composed of hiw and Fsn. Interacts with Rae1, probably as part of the hiw-Fsn complex. Interacts (via B30.2/SPRY domain) with vas. Interacts with Cul1. Expressed in nurse cells and oocytes (at protein level). Expressed in the brain. Expressed in the neuromuscular junction (NMJ).

It is found in the cytoplasm. Its subcellular location is the nucleus. It localises to the synapse. The protein resides in the cell projection. The protein localises to the axon. It is found in the perikaryon. It functions in the pathway protein modification; protein ubiquitination. Its function is as follows. Required in the presynaptic motoneuron to down-regulate the levels of wnd and restrain synaptic terminal growth at the neuromuscular junction (NMJ). Negatively regulates the localization of vas to the posterior pole of the oocyte. Involved in primordial germ cell formation. The polypeptide is F-box/SPRY domain-containing protein 1 (Fsn) (Drosophila melanogaster (Fruit fly)).